The chain runs to 294 residues: Undecaprenyl-diphosphatase (294 aa).

Transmembrane regions (helical) follow at residues 39–59 (PGAA…ILYF), 93–113 (TQMG…GLLF), 123–143 (NLWI…VVDA), 197–217 (VSFL…AVSA), 234–254 (ATIA…IGFL), and 265–285 (FAIY…CGVL).

This sequence belongs to the UppP family.

Its subcellular location is the cell membrane. The enzyme catalyses di-trans,octa-cis-undecaprenyl diphosphate + H2O = di-trans,octa-cis-undecaprenyl phosphate + phosphate + H(+). Catalyzes the dephosphorylation of undecaprenyl diphosphate (UPP). Confers resistance to bacitracin. The protein is Undecaprenyl-diphosphatase of Bifidobacterium adolescentis (strain ATCC 15703 / DSM 20083 / NCTC 11814 / E194a).